A 438-amino-acid chain; its full sequence is 23S rRNA (uracil(1939)-C(5))-methyltransferase RlmD (438 aa).

Residues 10–69 enclose the TRAM domain; the sequence is KASVNTKHLSVDVVRLDHNSAGIAFVDKKPVFIEGALPEEQAIIQFIEQKKQYSRAKLIK. Positions 82, 88, 91, and 169 each coordinate [4Fe-4S] cluster. Positions 272, 301, 306, 322, 349, and 370 each coordinate S-adenosyl-L-methionine. Catalysis depends on C396, which acts as the Nucleophile.

Belongs to the class I-like SAM-binding methyltransferase superfamily. RNA M5U methyltransferase family. RlmD subfamily.

It catalyses the reaction uridine(1939) in 23S rRNA + S-adenosyl-L-methionine = 5-methyluridine(1939) in 23S rRNA + S-adenosyl-L-homocysteine + H(+). Its function is as follows. Catalyzes the formation of 5-methyl-uridine at position 1939 (m5U1939) in 23S rRNA. This is 23S rRNA (uracil(1939)-C(5))-methyltransferase RlmD from Aliivibrio salmonicida (strain LFI1238) (Vibrio salmonicida (strain LFI1238)).